A 505-amino-acid polypeptide reads, in one-letter code: MGKFTSFLKRAGNATKRALTSDSAKKMYKLAGKTLQRVVESEVGSAAIDGVMQGAIQSIIQGENLGDSIKQAVILNVAGTLESAPDPLSPGEQLLYNKVSEIEKMEKEDRVIETHNAKIEEKFGKDLLAIRKIVKGEVDAEKLEGNEIKYVEKALSGLLEIGKDQSERITKLYRALQTEEDLRTRDETRMINEYREKFDALKEAIEIEQQATHDEAIQEMLDLSAEVIETASEEVPIFGAGAANVIATTRAIQGGLKLKEIVDKLTGIDLSHLKVADIHPHIIEKAMLRDTVTDKDLAMAIKSKVDVIDEMNVETQHVIDAVLPIVKQEYEKHDNKYHVRIPGALKIHSEHTPKIHIYTTPWDSDSVFMCRAIAPHHQQRSFFIGFDLEIEYVHFEDTSVEGHILHGGAITVEGRGFRQAYTEFMNAAWGMPTTPELHKRKLQRSMGTHPIYMGSMDYAISYEQLVSNAMRLVYDSELQMHCLRGPLKFQRRTLMNALLYGVKIA.

The interval 1-42 is involved in membrane permeabilization; sequence MGKFTSFLKRAGNATKRALTSDSAKKMYKLAGKTLQRVVESE.

It belongs to the orbivirus VP5 family.

It is found in the virion. VP5 protein is one of the two proteins (with VP2) which constitute the virus particle outer capsid. Acts as a membrane permeabilization protein that mediates release of viral particles from endosomal compartments into the cytoplasm. Permeabilization activity is probably negatively regulated by VP2 and is triggered by endosomal degradation of VP2 and exposure to low pH. This is Outer capsid protein VP5 (Segment-6) from African horse sickness virus (AHSV).